The primary structure comprises 385 residues: Probable thioesterase PNKD (385 aa).

The interval Lys-32 to Pro-58 is disordered. 7 residues coordinate Zn(2+): His-172, His-174, Asp-176, His-177, His-229, Asp-253, and His-291.

This sequence belongs to the metallo-beta-lactamase superfamily. Glyoxalase II family. As to quaternary structure, isoform 2 interacts with the sarcomeric proteins, MRLC2, MYOM1 and ENO3. Zn(2+) is required as a cofactor. Undergoes cleavage at the N-terminus. As to expression, isoform 1 is only expressed in the brain. Isoform 2 is ubiquitously detected with highest expression in skeletal muscle and detected in myocardial myofibrils.

It is found in the cell membrane. Its subcellular location is the mitochondrion. The protein localises to the cytoplasm. It localises to the golgi apparatus. The protein resides in the endoplasmic reticulum. It carries out the reaction a thioester + H2O = a thiol + a carboxylate + H(+). Probable thioesterase that may play a role in cellular detoxification processes; it likely acts on a yet-unknown alpha-hydroxythioester substrate. In vitro, it is able to catalyze the hydrolysis of S-D-lactoyl-glutathione to form glutathione and D-lactic acid at very low rate, though this reaction is not physiologically relevant in vivo. In Homo sapiens (Human), this protein is Probable thioesterase PNKD (PNKD).